The chain runs to 97 residues: Eotaxin (97 aa).

Positions 1-23 (MQLSTALLFLLLTATSFTSQVLA) are cleaved as a signal peptide. Disulfide bonds link C32–C57 and C33–C73. T94 carries an O-linked (GalNAc...) threonine glycan.

It belongs to the intercrine beta (chemokine CC) family.

It localises to the secreted. In terms of biological role, in response to the presence of allergens, this protein directly promotes the accumulation of eosinophils (a prominent feature of allergic inflammatory reactions), but not lymphocytes, macrophages or neutrophils. Binds to CCR3. The protein is Eotaxin (Ccl11) of Rattus norvegicus (Rat).